The chain runs to 1978 residues: Sodium channel protein type 8 subunit alpha (1978 aa).

Disordered regions lie at residues 1–20 (MAAR…FTPE) and 28–62 (RIAE…LEAG). Over 1–132 (MAARVLAPPG…RIAIKILIHS (132 aa)) the chain is Cytoplasmic. Residues 28 to 61 (RIAESKLKKPPKADGSHREDDEDSKPKPNSDLEA) are compositionally biased toward basic and acidic residues. Residues 114-442 (ILSPFNLIRR…KAMLEQLKKQ (329 aa)) form an I repeat. A helical transmembrane segment spans residues 133–151 (VFSMIIMCTILTNCVFMTF). At 152-158 (SNPPEWS) the chain is on the extracellular side. The helical transmembrane segment at 159-179 (KNVEYTFTGIYTFESLVKIIA) threads the bilayer. The Cytoplasmic portion of the chain corresponds to 180–193 (RGFCIDGFTFLRDP). The helical transmembrane segment at 194-211 (WNWLDFSVIMMAYVTEFV) threads the bilayer. Topologically, residues 212-217 (DLGNVS) are extracellular. Asn-215 is a glycosylation site (N-linked (GlcNAc...) asparagine). Residues 218 to 234 (ALRTFRVLRALKTISVI) traverse the membrane as a helical segment. Residues 235 to 253 (PGLKTIVGALIQSVKKLSD) are Cytoplasmic-facing. A helical membrane pass occupies residues 254-273 (VMILTVFCLSVFALIGLQLF). Residues 274–355 (MGNLRNKCVV…PNYGYTSFDT (82 aa)) lie on the Extracellular side of the membrane. A disulfide bridge links Cys-281 with Cys-333. N-linked (GlcNAc...) asparagine glycosylation is found at Asn-289, Asn-295, Asn-308, and Asn-326. The pore-forming intramembrane region spans 356-380 (FSWAFLALFRLMTQDYWENLYQLTL). Glu-373 provides a ligand contact to Na(+). Residues 381–387 (RAAGKTY) are Extracellular-facing. Residues 388 to 408 (MIFFVLVIFVGSFYLVNLILA) traverse the membrane as a helical segment. At 409–751 (VVAMAYEEQN…EIVNLIVMDP (343 aa)) the chain is on the cytoplasmic side. Disordered stretches follow at residues 446–530 (AQAA…KAFR) and 576–597 (DPGS…SEGR). Low complexity predominate over residues 473–486 (SPRSSSELSKLSSK). Positions 489 to 500 (KERRNRRKKRKQ) are enriched in basic residues. Composition is skewed to basic and acidic residues over residues 501–530 (KELS…KAFR) and 586–597 (DEHSTVEESEGR). A phosphoserine mark is found at Ser-518 and Ser-520. One copy of the II repeat lies at 733 to 1005 (CHPYWIKLKE…QISVIRIKKG (273 aa)). A helical membrane pass occupies residues 752–770 (FVDLAITICIVLNTLFMAM). Topologically, residues 771-781 (EHHPMTPQFEH) are extracellular. A helical membrane pass occupies residues 782–801 (VLAVGNLVFTGIFTAEMFLK). At 802 to 815 (LIAMDPYYYFQEGW) the chain is on the cytoplasmic side. The helical transmembrane segment at 816–835 (NIFDGFIVSLSLMELGLADV) threads the bilayer. The Extracellular segment spans residues 836–837 (EG). Residues 838 to 855 (LSVLRSFRLLRVFKLAKS) traverse the membrane as a helical segment. Topologically, residues 856–871 (WPTLNMLIKIIGNSVG) are cytoplasmic. A helical membrane pass occupies residues 872–890 (ALGNLTLVLAIIVFIFAVV). Topologically, residues 891–919 (GMQLFGKSYKECVCKISQECKLPRWHMND) are extracellular. A disulfide bridge connects residues Cys-904 and Cys-910. The segment at residues 920–940 (FFHSFLIVFRVLCGEWIETMW) is an intramembrane region (pore-forming). 2 residues coordinate Na(+): Glu-934 and Glu-937. Residues 941–953 (DCMEVAGQAMCLI) are Extracellular-facing. Residues Cys-942 and Cys-951 are joined by a disulfide bond. Residues 954–974 (VFMMVMVIGNLVVLNLFLALL) form a helical membrane-spanning segment. Topologically, residues 975–1197 (LSSFSADNLA…TCFLIVEHNW (223 aa)) are cytoplasmic. The tract at residues 1105-1146 (NLNTEDVSSESDPEGSKDKLDDTSSSEGSTIDIKPEVEEVPV) is disordered. An III repeat occupies 1178 to 1493 (LGKSWWILRK…KKYYNAMKKL (316 aa)). A helical transmembrane segment spans residues 1198-1215 (FETFIIFMILLSSGALAF). The Extracellular segment spans residues 1216 to 1228 (EDIYIEQRKTIRT). A helical membrane pass occupies residues 1229–1247 (ILEYADKVFTYIFILEMLL). The Cytoplasmic portion of the chain corresponds to 1248 to 1261 (KWTAYGFVKFFTNA). A helical membrane pass occupies residues 1262–1280 (WCWLDFLIVAVSLVSLIAN). Over 1281-1288 (ALGYSELG) the chain is Extracellular. Residues 1289–1307 (AIKSLRTLRALRPLRALSR) form a helical membrane-spanning segment. Topologically, residues 1308–1324 (FEGMRVVVNALVGAIPS) are cytoplasmic. The helical transmembrane segment at 1325–1344 (IMNVLLVCLIFWLIFSIMGV) threads the bilayer. Residues 1345–1397 (NLFAGKYHYCFNETSEIRFEIDEVNNKTDCEKLMEGNNTEIRWKNVKINFDNV) are Extracellular-facing. Cys-1354 and Cys-1374 are disulfide-bonded. Asn-1356, Asn-1370, and Asn-1381 each carry an N-linked (GlcNAc...) asparagine glycan. Residues 1398–1419 (GAGYLALLQVATFKGWMDIMYA) constitute an intramembrane region (pore-forming). Residues 1420–1436 (AVDSRKPDEQPDYEGNI) are Extracellular-facing. Residues 1437–1458 (YMYIYFVIFIIFGSFFTLNLFI) traverse the membrane as a helical segment. The Cytoplasmic segment spans residues 1459–1521 (GVIIDNFNQQ…IVFDFVTQQA (63 aa)). The residue at position 1495 (Ser-1495) is a Phosphoserine; by PKC. The stretch at 1502 to 1799 (IPRPLNKIQG…WEKFDPDATQ (298 aa)) is one IV repeat. A helical membrane pass occupies residues 1522–1539 (FDIVIMMLICLNMVTMMV). The Extracellular segment spans residues 1540 to 1550 (ETDTQSKQMEN). A helical transmembrane segment spans residues 1551-1569 (ILYWINLVFVIFFTCECVL). Residues 1570-1581 (KMFALRHYYFTI) lie on the Cytoplasmic side of the membrane. Residues 1582-1599 (GWNIFDFVVVILSIVGMF) form a helical membrane-spanning segment. Residues 1600–1612 (LADIIEKYFVSPT) are Extracellular-facing. The helical transmembrane segment at 1613–1629 (LFRVIRLARIGRILRLI) threads the bilayer. Topologically, residues 1630-1648 (KGAKGIRTLLFALMMSLPA) are cytoplasmic. The chain crosses the membrane as a helical span at residues 1649-1666 (LFNIGLLLFLVMFIFSIF). The Extracellular portion of the chain corresponds to 1667–1688 (GMSNFAYVKHEAGIDDMFNFET). Residues 1689 to 1711 (FGNSMICLFQITTSAGWDGLLLP) constitute an intramembrane region (pore-forming). Residues 1712–1740 (ILNRPPDCSLDKEHPGSGFKGDCGNPSVG) are Extracellular-facing. Cys-1719 and Cys-1734 are disulfide-bonded. The helical transmembrane segment at 1741–1763 (IFFFVSYIIISFLIVVNMYIAII) threads the bilayer. Residues 1764–1978 (LENFSVATEE…RQKEVRESKC (215 aa)) are Cytoplasmic-facing. The IQ domain occupies 1893–1922 (EEVSAVVLQRAYRGHLARRGFICRKITSNK). The tract at residues 1924–1978 (ENGGTHREKKESTPSTASLPSYDSVTKPDKEKQQRAEEGRRERAKRQKEVRESKC) is disordered. Residues 1936 to 1947 (TPSTASLPSYDS) are compositionally biased toward polar residues. Over residues 1949–1978 (TKPDKEKQQRAEEGRRERAKRQKEVRESKC) the composition is skewed to basic and acidic residues.

The protein belongs to the sodium channel (TC 1.A.1.10) family. Nav1.6/SCN8A subfamily. In terms of assembly, the voltage-sensitive sodium channel consists of an ion-conducting pore-forming alpha subunit regulated by one or more beta-1 (SCN1B), beta-2 (SCN2B), beta-3 (SCN3B) and/or beta-4 (SCN4B) subunits. Beta-1 (SCN1B) and beta-3 (SCN3B) are non-covalently associated with alpha, while beta-2 (SCN2B) and beta-4 (SCN4B) are covalently linked by disulfide bonds. Interacts with FGF13. Interacts with NEDD4 and NEDD4L. Interacts with FGF14, GBG3, GBB2 and SCN1B. Interacts with TMEM233. Interacts with the conotoxin GVIIJ. Interacts with the scorpion toxin BMK M1. Interacts with CALM1; the interaction modulates the inactivation rate of SCN8A. Post-translationally, may be ubiquitinated by NEDD4L; which would promote its endocytosis. Phosphorylation at Ser-1495 by PKC in a highly conserved cytoplasmic loop slows inactivation of the sodium channel and reduces peak sodium currents. Expressed in the hippocampus (at protein level). Expressed in brain, cerebellum and spinal cord. As to expression, expressed in non-neuronal tissues, such as monocytes/macrophages.

The protein localises to the cell membrane. It localises to the cell projection. Its subcellular location is the axon. It is found in the cytoplasmic vesicle. The protein resides in the podosome. The enzyme catalyses Na(+)(in) = Na(+)(out). Its function is as follows. Pore-forming subunit of a voltage-gated sodium channel complex assuming opened or closed conformations in response to the voltage difference across membranes and through which sodium ions selectively pass along their electrochemical gradient. Contributes to neuronal excitability by regulating action potential threshold and propagation. In terms of biological role, more specifically expressed in non-neuronal cells, could play a role in sodium release from intracellular compartments and participate in the control of podosomes formation and macrophages adhesion and movement. The chain is Sodium channel protein type 8 subunit alpha from Mus musculus (Mouse).